Here is a 280-residue protein sequence, read N- to C-terminus: Hydroxyethylthiazole kinase (280 aa).

Methionine 50 is a substrate binding site. Residues lysine 125 and threonine 178 each contribute to the ATP site. Residue glycine 205 coordinates substrate.

The protein belongs to the Thz kinase family. Mg(2+) serves as cofactor.

It catalyses the reaction 5-(2-hydroxyethyl)-4-methylthiazole + ATP = 4-methyl-5-(2-phosphooxyethyl)-thiazole + ADP + H(+). It functions in the pathway cofactor biosynthesis; thiamine diphosphate biosynthesis; 4-methyl-5-(2-phosphoethyl)-thiazole from 5-(2-hydroxyethyl)-4-methylthiazole: step 1/1. Catalyzes the phosphorylation of the hydroxyl group of 4-methyl-5-beta-hydroxyethylthiazole (THZ). This is Hydroxyethylthiazole kinase from Lacticaseibacillus paracasei (strain ATCC 334 / BCRC 17002 / CCUG 31169 / CIP 107868 / KCTC 3260 / NRRL B-441) (Lactobacillus paracasei).